Here is a 1288-residue protein sequence, read N- to C-terminus: Outer capsid protein lambda-2 (1288 aa).

Residue glycine 892–serine 899 coordinates ATP.

The protein belongs to the orthoreovirus lambda-2 protein family. Interacts with protein mu-NS; in viral inclusions.

It localises to the virion. The enzyme catalyses a 5'-end diphospho-ribonucleoside in mRNA + GTP + H(+) = a 5'-end (5'-triphosphoguanosine)-ribonucleoside in mRNA + diphosphate. It carries out the reaction a 5'-end (5'-triphosphoguanosine)-ribonucleoside in mRNA + S-adenosyl-L-methionine = a 5'-end (N(7)-methyl 5'-triphosphoguanosine)-ribonucleoside in mRNA + S-adenosyl-L-homocysteine. Outer capsid protein involved in mRNA capping. Catalyzes the last 3 enzymatic activities for formation of the 5' cap structure on the viral plus-strand transcripts, namely the RNA guanylyltransferase, RNA-7N- and RNA-2'O-methyltransferase activities. The chain is Outer capsid protein lambda-2 (L2) from Reovirus type 2 (strain D5/Jones) (T2J).